The following is a 335-amino-acid chain: Ornithine carbamoyltransferase, catabolic (335 aa).

Residues 59–62 (STRT), Gln86, Arg110, and 137–140 (HPTQ) each bind carbamoyl phosphate. Residues Asn169, Asp233, and 237-238 (SM) contribute to the L-ornithine site. Carbamoyl phosphate is bound by residues 274-275 (CL) and Arg319.

The protein belongs to the aspartate/ornithine carbamoyltransferase superfamily. OTCase family.

Its subcellular location is the cytoplasm. The catalysed reaction is carbamoyl phosphate + L-ornithine = L-citrulline + phosphate + H(+). It participates in amino-acid degradation; L-arginine degradation via ADI pathway; carbamoyl phosphate from L-arginine: step 2/2. Reversibly catalyzes the transfer of the carbamoyl group from carbamoyl phosphate (CP) to the N(epsilon) atom of ornithine (ORN) to produce L-citrulline. In Bacillus licheniformis (strain ATCC 14580 / DSM 13 / JCM 2505 / CCUG 7422 / NBRC 12200 / NCIMB 9375 / NCTC 10341 / NRRL NRS-1264 / Gibson 46), this protein is Ornithine carbamoyltransferase, catabolic (arcB).